The chain runs to 309 residues: UDP-N-acetylenolpyruvoylglucosamine reductase (309 aa).

One can recognise an FAD-binding PCMH-type domain in the interval 34–221; that stretch reads RVGGPAQVLF…TAAREAAQPI (188 aa). Arginine 179 is an active-site residue. The Proton donor role is filled by serine 228. The active site involves glutamate 298.

Belongs to the MurB family. Requires FAD as cofactor.

The protein resides in the cytoplasm. The enzyme catalyses UDP-N-acetyl-alpha-D-muramate + NADP(+) = UDP-N-acetyl-3-O-(1-carboxyvinyl)-alpha-D-glucosamine + NADPH + H(+). It participates in cell wall biogenesis; peptidoglycan biosynthesis. Cell wall formation. The polypeptide is UDP-N-acetylenolpyruvoylglucosamine reductase (Methylorubrum extorquens (strain CM4 / NCIMB 13688) (Methylobacterium extorquens)).